A 489-amino-acid chain; its full sequence is Pluviatolide synthase (489 aa).

A helical transmembrane segment spans residues 6-26; sequence SVLAMSSTLILALAMALIFLF. C432 is a binding site for heme.

Belongs to the cytochrome P450 family. It depends on heme as a cofactor. In terms of tissue distribution, expressed in leaves, rhizomes and stems.

Its subcellular location is the membrane. It carries out the reaction (-)-matairesinol + reduced [NADPH--hemoprotein reductase] + O2 = (-)-pluviatolide + oxidized [NADPH--hemoprotein reductase] + 2 H2O + H(+). Its pathway is aromatic compound metabolism; phenylpropanoid biosynthesis. Its function is as follows. Cytochrome P450 involved in the biosynthesis of etoposide, a chemotherapeutic compound of the topoisomerase inhibitor family. Catalyzes the conversion of matairesinol to pluviatolide. The protein is Pluviatolide synthase of Sinopodophyllum hexandrum (Himalayan may apple).